The sequence spans 460 residues: Vitamin K-dependent protein C (460 aa).

An N-terminal signal peptide occupies residues 1–18 (MWQFRVFLLLMSTWGISS). The propeptide occupies 19–41 (IPAHPDPVFSSSEHAHQVLRVRR). In terms of domain architecture, Gla spans 42–87 (ANSFLEEMRPGSLERECMEEICDFEEAQEIFQNVEDTLAFWIKYFD). A 4-carboxyglutamate mark is found at Glu-47, Glu-48, Glu-55, Glu-57, Glu-60, Glu-61, Glu-66, Glu-67, Glu-70, and Glu-76. A disulfide bond links Cys-58 and Cys-63. Cystine bridges form between Cys-91-Cys-110, Cys-100-Cys-105, Cys-104-Cys-119, Cys-121-Cys-130, Cys-139-Cys-150, Cys-146-Cys-159, Cys-161-Cys-174, Cys-182-Cys-319, and Cys-238-Cys-254. EGF-like domains follow at residues 96–131 (LDHQCDSPCCGHGTCIDGIGSFSCSCDKGWEGKFCQ) and 135–175 (RFQD…MRCK). The residue at position 112 (Asp-112) is a (3R)-3-hydroxyaspartate. Residues 213–449 (VNGTLTKQGD…YLKWIHSYIG (237 aa)) enclose the Peptidase S1 domain. An N-linked (GlcNAc...) asparagine glycan is attached at Asn-214. His-253 acts as the Charge relay system in catalysis. N-linked (GlcNAc...) asparagine glycosylation is present at Asn-290. Residue Asp-299 is the Charge relay system of the active site. Asn-354 carries an N-linked (GlcNAc...) asparagine glycan. Cystine bridges form between Cys-372–Cys-386 and Cys-397–Cys-425. Catalysis depends on Ser-401, which acts as the Charge relay system.

This sequence belongs to the peptidase S1 family. As to quaternary structure, synthesized as a single chain precursor, which is cleaved into a light chain and a heavy chain held together by a disulfide bond. The enzyme is then activated by thrombin, which cleaves a tetradecapeptide from the amino end of the heavy chain; this reaction, which occurs at the surface of endothelial cells, is strongly promoted by thrombomodulin. The vitamin K-dependent, enzymatic carboxylation of some Glu residues allows the modified protein to bind calcium. Post-translationally, the iron and 2-oxoglutarate dependent 3-hydroxylation of aspartate and asparagine is (R) stereospecific within EGF domains. Plasma; synthesized in the liver.

The protein resides in the secreted. It is found in the golgi apparatus. The protein localises to the endoplasmic reticulum. The catalysed reaction is Degradation of blood coagulation factors Va and VIIIa.. Protein C is a vitamin K-dependent serine protease that regulates blood coagulation by inactivating factors Va and VIIIa in the presence of calcium ions and phospholipids. Exerts a protective effect on the endothelial cell barrier function. The protein is Vitamin K-dependent protein C (Proc) of Mus musculus (Mouse).